The following is a 116-amino-acid chain: Nucleoid-associated protein MLBr02330 (116 aa).

The interval 96–116 (LTSAMRPTAPPPTPPTYMAGT) is disordered.

This sequence belongs to the YbaB/EbfC family. Homodimer.

It localises to the cytoplasm. The protein resides in the nucleoid. Functionally, binds to DNA and alters its conformation. May be involved in regulation of gene expression, nucleoid organization and DNA protection. This chain is Nucleoid-associated protein MLBr02330, found in Mycobacterium leprae (strain Br4923).